The chain runs to 468 residues: Probable soluble pyridine nucleotide transhydrogenase (468 aa).

An FAD-binding site is contributed by 33 to 42 (ERGRMLGGVC).

The protein belongs to the class-I pyridine nucleotide-disulfide oxidoreductase family. FAD serves as cofactor.

It localises to the cytoplasm. It carries out the reaction NAD(+) + NADPH = NADH + NADP(+). In terms of biological role, conversion of NADPH, generated by peripheral catabolic pathways, to NADH, which can enter the respiratory chain for energy generation. This chain is Probable soluble pyridine nucleotide transhydrogenase (sthA), found in Mycobacterium bovis (strain ATCC BAA-935 / AF2122/97).